The following is a 354-amino-acid chain: Lysophosphatidic acid receptor 3 (354 aa).

Residues 1–31 (MNECHYDKRMDFFYNRSNTDTADEWTGTKLV) are Extracellular-facing. Asn-15 is a glycosylation site (N-linked (GlcNAc...) asparagine). Residues 32–52 (IVLCVGTFFCLFIFFSNSLVI) form a helical membrane-spanning segment. Residues 53 to 67 (AAVITNRKFHFPFYY) are Cytoplasmic-facing. The helical transmembrane segment at 68 to 88 (LLANLAAADFFAGIAYVFLMF) threads the bilayer. Over 89 to 101 (NTGPVSKTLTVNR) the chain is Extracellular. Residues 102-124 (WLLRQGLLDTSLTASLANLLVIA) form a helical membrane-spanning segment. Over 125 to 146 (VERHMSIMRMRIHSNLTKKRVT) the chain is Cytoplasmic. The helical transmembrane segment at 147–167 (LLILLVWAIAIFMGAVPTLGW) threads the bilayer. Residues 168–186 (NCLCNISACSSLAPIYSRS) lie on the Extracellular side of the membrane. N-linked (GlcNAc...) asparagine glycosylation occurs at Asn-172. Residues 187–207 (YLIFWTVSNLLAFFIMVVVYV) form a helical membrane-spanning segment. Over 208 to 240 (RIYMYVKRKTNVLSPHTSGSISRRRAPMKLMKT) the chain is Cytoplasmic. Residues 241-261 (VMTVLGAFVVCWTPGLVVLLL) traverse the membrane as a helical segment. Over 262–276 (DGLNCKQCNVQHVKR) the chain is Extracellular. Residues 277–295 (WFLLLALLNSVMNPIIYSY) traverse the membrane as a helical segment. At 296–354 (KDEDMYNTMRKMICCAPHDSNAERHPSRIPSTIHSRSDTGSQYLEDSISQGQVCNKSSS) the chain is on the cytoplasmic side. Cys-309 is lipidated: S-palmitoyl cysteine.

It belongs to the G-protein coupled receptor 1 family.

Its subcellular location is the cell membrane. In terms of biological role, receptor for lysophosphatidic acid (LPA), a mediator of diverse cellular activities. Seems to be coupled to the G(i)/G(o) and G(q) families of heteromeric G proteins. This is Lysophosphatidic acid receptor 3 (Lpar3) from Rattus norvegicus (Rat).